The primary structure comprises 834 residues: Mannosyl-oligosaccharide glucosidase (834 aa).

The span at 1 to 10 (MARGERRRRA) shows a compositional bias: basic residues. Topologically, residues 1-36 (MARGERRRRAAAAEGARPLERARGAGRRDGRAGGAR) are cytoplasmic. The tract at residues 1-37 (MARGERRRRAAAAEGARPLERARGAGRRDGRAGGARG) is disordered. Residues 3-9 (RGERRRR) carry the Endoplasmic reticulum targeting motif. A compositionally biased stretch (basic and acidic residues) spans 17–31 (RPLERARGAGRRDGR). Residues 37 to 57 (GSAGGAALAVVVLALAFGLSG) form a helical; Signal-anchor for type II membrane protein membrane-spanning segment. Residues 58-834 (RWVLAWLGVR…LVLLIMAEEY (777 aa)) are Lumenal-facing. Positions 74 to 136 (PAPSALPPDS…GTPPKLRHTC (63 aa)) are required for endoplasmic reticulum targeting. The active-site Proton donor is aspartate 580. A glycan (N-linked (GlcNAc...) asparagine) is linked at asparagine 654. The Proton acceptor role is filled by glutamate 804.

This sequence belongs to the glycosyl hydrolase 63 family.

The protein localises to the endoplasmic reticulum membrane. The catalysed reaction is N(4)-(alpha-D-Glc-(1-&gt;2)-alpha-D-Glc-(1-&gt;3)-alpha-D-Glc-(1-&gt;3)-alpha-D-Man-(1-&gt;2)-alpha-D-Man-(1-&gt;2)-alpha-D-Man-(1-&gt;3)-[alpha-D-Man-(1-&gt;2)-alpha-D-Man-(1-&gt;3)-[alpha-D-Man-(1-&gt;2)-alpha-D-Man-(1-&gt;6)]-alpha-D-Man-(1-&gt;6)]-beta-D-Man-(1-&gt;4)-beta-D-GlcNAc-(1-&gt;4)-beta-D-GlcNAc)-L-asparaginyl-[protein] + H2O = N(4)-(alpha-D-Glc-(1-&gt;3)-alpha-D-Glc-(1-&gt;3)-alpha-D-Man-(1-&gt;2)-alpha-D-Man-(1-&gt;2)-alpha-D-Man-(1-&gt;3)-[alpha-D-Man-(1-&gt;2)-alpha-D-Man-(1-&gt;3)-[alpha-D-Man-(1-&gt;2)-alpha-D-Man-(1-&gt;6)]-alpha-D-Man-(1-&gt;6)]-beta-D-Man-(1-&gt;4)-beta-D-GlcNAc-(1-&gt;4)-beta-D-GlcNAc)-L-asparaginyl-[protein] + beta-D-glucose. It functions in the pathway glycan metabolism; N-glycan degradation. In the context of N-glycan degradation, cleaves the distal alpha 1,2-linked glucose residue from the Glc(3)Man(9)GlcNAc(2) oligosaccharide precursor in a highly specific manner. In Rattus norvegicus (Rat), this protein is Mannosyl-oligosaccharide glucosidase.